The primary structure comprises 486 residues: MEKYMSLKKKISYSEDKDVSGSEKANELLKWLQAYIPGKDSNIVVEHEPSKDAAKELIRGDYRWGHQDDDKSKAFQLKYTFLESKPDDMPWHISEFSAFNEKQKAAAKLSIQSWADVANINFVETTDAKEANITFGFFDVSLTGSYAFAYLPRPEKTQLGTWYNAKSRTFSNNDIDVNGYGRQTFTHEIGHTLGLQHPADYNASDEVSPTYKNSATYFEDSRAYTVMSYFSEKNTGQDFKGIYSSAPLLNDISAIQAVYGANNTIRADDTVYGFNSNTDRDFYTAKDENSKLLFTAWDTGGNDTFDFSGFTQDQRINLNEASFSDVGGLKGNVSIARGVTIENAIGGSGNDVLIGNDAANTLKGGAGDDIIYGGLGADNLWGGEGKDTFVYLSAKESPPLERDWIHDFVSGEDKIDVSLFDLGEAGKGGVRFVREFTGEVGEAVLRYNTVDKVNDFAINLGGEFSYDDFWVKIVGEPILESDFILS.

His-187 contributes to the Zn(2+) binding site. Glu-188 is a catalytic residue. Residues His-191 and His-197 each contribute to the Zn(2+) site. Ca(2+)-binding residues include Arg-266, Asp-269, Asp-298, Gly-300, Gly-301, Asp-303, Thr-340, and Glu-342. Hemolysin-type calcium-binding repeat units lie at residues 345–362 and 363–380; these read IGGSGNDVLIGNDAANTL and KGGAGDDIIYGGLGADNL.

The protein belongs to the peptidase M10B family. Requires Zn(2+) as cofactor. The cofactor is Ca(2+).

It localises to the secreted. The catalysed reaction is Preferential cleavage of bonds with hydrophobic residues in P1'.. This chain is Serralysin (prtA1), found in Photorhabdus luminescens (Xenorhabdus luminescens).